A 217-amino-acid chain; its full sequence is UPF0502 protein ASA_1460 (217 aa).

Belongs to the UPF0502 family.

This chain is UPF0502 protein ASA_1460, found in Aeromonas salmonicida (strain A449).